The chain runs to 536 residues: MSDIGVYNAAFGPDRAGLRNLKRVFWNLEAPSLYEQALQRGEAQLAAGGALVAETGIHTGRSPKDKFVVRDSGTEDQVWWDNNGAITAEQFDRLHADFVAHAEGKDLFAQDLYGGAEPAYRVRARVYTEYAWHSLFIRNLLIRPERDALGAYEPDLTIIDLPSFKADPARHGVRSETVIACDFTRKIVLIGGSSYAGEMKKSVFTYLNYILPKAGVMPMHCSANVGAQGDSALFFGLSGTGKTTLSNDPARVLLGDDEHGWGPKGIFNFEGGCYAKTIRLSREAEPEIYATTERFGTVMENVVIDPVTRLPDFDDASKTENTRCAYPLPFIPNASATGRAGHPKNIVMLTCDAFGVLPPIAKLTGAEAMYHFLSGYTAKVAGTEKGLKGPEATFSTCFGAPFMPRHPSVYGNLLRDLIARHHVDCWLVNTGWTGGGVGTGRRMPIRVTRRLLTAALDGSLAKADYRRDPYFGFAVPTSVPGVEPHILYPVKTWADKAAFAETAKRLVEMFQANFKRFEAHVDADVRAAEPTMSIAA.

3 residues coordinate substrate: R61, Y195, and K201. ATP is bound by residues K201, H220, and 236–244; that span reads GLSGTGKTT. Mn(2+)-binding residues include K201 and H220. D257 serves as a coordination point for Mn(2+). The ATP site is built by E285, R323, and T448. Position 323 (R323) interacts with substrate.

The protein belongs to the phosphoenolpyruvate carboxykinase (ATP) family. It depends on Mn(2+) as a cofactor.

It localises to the cytoplasm. The enzyme catalyses oxaloacetate + ATP = phosphoenolpyruvate + ADP + CO2. The protein operates within carbohydrate biosynthesis; gluconeogenesis. In terms of biological role, involved in the gluconeogenesis. Catalyzes the conversion of oxaloacetate (OAA) to phosphoenolpyruvate (PEP) through direct phosphoryl transfer between the nucleoside triphosphate and OAA. The polypeptide is Phosphoenolpyruvate carboxykinase (ATP) (Methylobacterium sp. (strain 4-46)).